The primary structure comprises 326 residues: Lipopolysaccharide heptosyltransferase 1 (326 aa).

Residues threonine 187, threonine 188, lysine 192, glutamate 222, and methionine 242 each coordinate ADP. ADP-L-glycero-beta-D-manno-heptose-binding residues include threonine 187, threonine 188, lysine 192, glutamate 222, methionine 242, aspartate 261, threonine 262, glycine 263, and histidine 266. The ADP site is built by threonine 262 and glycine 263.

Belongs to the glycosyltransferase 9 family. Monomer.

The protein localises to the cell inner membrane. It catalyses the reaction an alpha-Kdo-(2-&gt;4)-alpha-Kdo-(2-&gt;6)-lipid A + ADP-L-glycero-beta-D-manno-heptose = an L-alpha-D-Hep-(1-&gt;5)-[alpha-Kdo-(2-&gt;4)]-alpha-Kdo-(2-&gt;6)-lipid A + ADP + H(+). The enzyme catalyses alpha-Kdo-(2-&gt;4)-alpha-Kdo-(2-&gt;6)-lipid A (E. coli) + ADP-L-glycero-beta-D-manno-heptose = L-alpha-D-Hep-(1-&gt;5)-[alpha-Kdo-(2-&gt;4)]-alpha-Kdo-(2-&gt;6)-lipid A (E. coli) + ADP + H(+). It participates in bacterial outer membrane biogenesis; LPS core biosynthesis. Its activity is regulated as follows. Inhibited by ADP-L-glycero-beta-D-gluco-2-deoxy-2-fluoro-heptose (ADP-2F-heptose), a non-cleavable analog of the substrate ADP-L-glycero-beta-D-manno-heptose. In terms of biological role, glycosyltransferase involved in the biosynthesis of the core oligosaccharide region of lipopolysaccharide (LPS). Catalyzes the addition of the first heptose unit to one 3-deoxy-D-manno-octulosonic acid (Kdo) residue of the Kdo2-lipid A module. This chain is Lipopolysaccharide heptosyltransferase 1, found in Escherichia coli O18:K1:H7 (strain RS218 / NMEC).